We begin with the raw amino-acid sequence, 437 residues long: Glycogen synthase (437 aa).

Lysine 15 serves as a coordination point for ADP-alpha-D-glucose.

It belongs to the glycosyltransferase 1 family. Bacterial/plant glycogen synthase subfamily.

The catalysed reaction is [(1-&gt;4)-alpha-D-glucosyl](n) + ADP-alpha-D-glucose = [(1-&gt;4)-alpha-D-glucosyl](n+1) + ADP + H(+). It functions in the pathway glycan biosynthesis; glycogen biosynthesis. Synthesizes alpha-1,4-glucan chains using ADP-glucose. The chain is Glycogen synthase from Thermus thermophilus (strain ATCC BAA-163 / DSM 7039 / HB27).